Consider the following 202-residue polypeptide: Holliday junction resolvase RecU (202 aa).

Residues Thr85, Asp87, Glu100, and Gln119 each coordinate Mg(2+).

Belongs to the RecU family. It depends on Mg(2+) as a cofactor.

It localises to the cytoplasm. The catalysed reaction is Endonucleolytic cleavage at a junction such as a reciprocal single-stranded crossover between two homologous DNA duplexes (Holliday junction).. In terms of biological role, endonuclease that resolves Holliday junction intermediates in genetic recombination. Cleaves mobile four-strand junctions by introducing symmetrical nicks in paired strands. Promotes annealing of linear ssDNA with homologous dsDNA. Required for DNA repair, homologous recombination and chromosome segregation. This Streptococcus equi subsp. zooepidemicus (strain MGCS10565) protein is Holliday junction resolvase RecU.